The primary structure comprises 121 residues: uncharacterized protein (121 aa).

A helical membrane pass occupies residues 65–84 (TILFYTPTLICFLFLQNFLY).

It localises to the membrane. This is an uncharacterized protein from Saccharomyces cerevisiae (strain ATCC 204508 / S288c) (Baker's yeast).